A 294-amino-acid polypeptide reads, in one-letter code: tRNA dimethylallyltransferase (294 aa).

10–17 (GPTAVGKT) contributes to the ATP binding site. Substrate is bound at residue 12–17 (TAVGKT). The tract at residues 35-38 (DSQQ) is interaction with substrate tRNA.

The protein belongs to the IPP transferase family. In terms of assembly, monomer. The cofactor is Mg(2+).

It catalyses the reaction adenosine(37) in tRNA + dimethylallyl diphosphate = N(6)-dimethylallyladenosine(37) in tRNA + diphosphate. Its function is as follows. Catalyzes the transfer of a dimethylallyl group onto the adenine at position 37 in tRNAs that read codons beginning with uridine, leading to the formation of N6-(dimethylallyl)adenosine (i(6)A). The polypeptide is tRNA dimethylallyltransferase (Streptococcus pneumoniae serotype 4 (strain ATCC BAA-334 / TIGR4)).